A 178-amino-acid polypeptide reads, in one-letter code: Dual-action ribosomal maturation protein DarP (178 aa).

This sequence belongs to the DarP family.

Its subcellular location is the cytoplasm. In terms of biological role, member of a network of 50S ribosomal subunit biogenesis factors which assembles along the 30S-50S interface, preventing incorrect 23S rRNA structures from forming. Promotes peptidyl transferase center (PTC) maturation. The protein is Dual-action ribosomal maturation protein DarP of Mannheimia succiniciproducens (strain KCTC 0769BP / MBEL55E).